The following is a 378-amino-acid chain: MQTPKLIRPTLLSMAIVSSMAWATGASAALVPPKGYDAPIEKMKTGDHNFTCEAIPKPYTDKLVFRSKYEGSDKARATLNAVSEEAFRDATKDITTLERGVSKVVMQYMRDGRPEQLDCALNMMTTWAKADALESREFNHTGKSMRKWALGSMSSAYLRLKFSDSHPLANRQQDAQIIEAWFSKLADQVVSDWSNLPLEKINNHSYWAAWSVMSTAVVTNRKDLFDWAVKEFKVAANQVDKDGYLPNEMKRRQRALSYHNYALPPLAMIASFAQANGVDLRPENNGALKRLGDRVLAGVKDPASFAEHNGEKQDMTDLKKDPKFAWLEPYCSLYTCSPDVLEDKHEKQPFKTFRLGGDLTKVYDPTHEKGDKGDNDGS.

An N-terminal signal peptide occupies residues 1 to 28; that stretch reads MQTPKLIRPTLLSMAIVSSMAWATGASA. Residues 67–68, 140–141, and tyrosine 258 contribute to the substrate site; these read SK and HT.

This sequence belongs to the polysaccharide lyase 5 family.

The protein resides in the periplasm. The catalysed reaction is Eliminative cleavage of alginate to give oligosaccharides with 4-deoxy-alpha-L-erythro-hex-4-enuronosyl groups at their non-reducing ends and beta-D-mannuronate at their reducing end.. Its function is as follows. Catalyzes the depolymerization of alginate by cleaving the beta-1,4 glycosidic bond between two adjacent sugar residues via a beta-elimination mechanism. May serve to degrade mislocalized alginate that is trapped in the periplasmic space. The polypeptide is Alginate lyase (Pseudomonas syringae pv. tomato (strain ATCC BAA-871 / DC3000)).